The primary structure comprises 548 residues: Probable malate:quinone oxidoreductase (548 aa).

The protein belongs to the MQO family. Requires FAD as cofactor.

It catalyses the reaction (S)-malate + a quinone = a quinol + oxaloacetate. It participates in carbohydrate metabolism; tricarboxylic acid cycle; oxaloacetate from (S)-malate (quinone route): step 1/1. This is Probable malate:quinone oxidoreductase from Escherichia coli (strain SE11).